The sequence spans 284 residues: 3-methyl-2-oxobutanoate hydroxymethyltransferase (284 aa).

Asp44 and Asp83 together coordinate Mg(2+). 3-methyl-2-oxobutanoate is bound by residues Asp44–Ser45, Asp83, and Lys112. Glu114 is a Mg(2+) binding site. Glu181 functions as the Proton acceptor in the catalytic mechanism.

This sequence belongs to the PanB family. As to quaternary structure, homodecamer; pentamer of dimers. It depends on Mg(2+) as a cofactor.

It is found in the cytoplasm. The catalysed reaction is 3-methyl-2-oxobutanoate + (6R)-5,10-methylene-5,6,7,8-tetrahydrofolate + H2O = 2-dehydropantoate + (6S)-5,6,7,8-tetrahydrofolate. It participates in cofactor biosynthesis; coenzyme A biosynthesis. Its activity is regulated as follows. Neither activated nor inhibited by coenzyme A. Catalyzes the reversible reaction in which hydroxymethyl group from 5,10-methylenetetrahydrofolate is transferred onto alpha-ketoisovalerate to form ketopantoate. The chain is 3-methyl-2-oxobutanoate hydroxymethyltransferase from Thermococcus kodakarensis (strain ATCC BAA-918 / JCM 12380 / KOD1) (Pyrococcus kodakaraensis (strain KOD1)).